A 533-amino-acid chain; its full sequence is Tyrosine protein-kinase src-1 (533 aa).

G2 carries N-myristoyl glycine lipidation. Residues 71-132 (QERETLVALY…PRNFVAKQQT (62 aa)) form the SH3 domain. One can recognise an SH2 domain in the interval 138–237 (WYAGKIPRNR…GLCCQLTFPA (100 aa)). In terms of domain architecture, Protein kinase spans 262-521 (LHLKRKLGDG…TLYHFFDDYF (260 aa)). ATP is bound by residues 268–276 (LGDGNFGEV) and K290. D381 (proton acceptor) is an active-site residue. A Phosphotyrosine; by autocatalysis modification is found at Y416. The residue at position 528 (Y528) is a Phosphotyrosine.

This sequence belongs to the protein kinase superfamily. Tyr protein kinase family. SRC subfamily. Interacts (via SH2 domain and SH3 domain) with unc-5 (via cytoplasmic domain); the interaction requires kinase activity. Interacts (when activated and phosphorylated at 'Tyr-416') with ina-1 (via cytoplasmic domain) and with ced-2 (via SH2 domain). It depends on Mg(2+) as a cofactor. Requires Mn(2+) as cofactor. May be phosphorylated on Tyr-528 by csk-1. In terms of tissue distribution, expressed in some neurons (ASE, ADF, AVA, AUA, RMDV and BAG) in the head region, anchor cell, vulva, cells around anus, body wall muscle, pharyngeal muscles in procorpus and metacorpus. Expressed in gonadal distal tip cells.

The protein resides in the cell membrane. The protein localises to the cell projection. Its subcellular location is the phagocytic cup. It carries out the reaction L-tyrosyl-[protein] + ATP = O-phospho-L-tyrosyl-[protein] + ADP + H(+). Its activity is regulated as follows. May be activated by autophosphorylation. May be inhibited by csk-1-mediated phosphorylation. Its function is as follows. Non-receptor tyrosine-protein kinase which plays a role in endoderm development by controlling spindle orientation in EMS blastomere, probably downstream of receptor mes-1. Also involved in embryonic body morphogenesis, especially in the formation of the pharynx and the intestine. May be dispensable for pharyngeal muscle organization in the adult. Probably phosphorylates netrin receptor unc-5, to regulate distal tip cell (DTC) migration during gonad development and in axon repulsion. Plays a role in the migration of the QR neuroblast, a precursor of the AVM neuron, and in the migration of the axon cone of AVM, ALM, CAN and PVM neurons. May act downstream of migratory protein mig-13 to control AVM neuron migration. Probably downstream of integrin ina-1/pat-3, plays a role in the clearance of apoptotic cells during mid-embryogenesis. Phosphorylates ced-1 at 'Tyr-1019' which promotes ced-1 proteasomal degradation, maintaining appropriate ced-1 levels for apoptotic cell clearance. This chain is Tyrosine protein-kinase src-1, found in Caenorhabditis elegans.